Consider the following 394-residue polypeptide: Acetyl-CoA acetyltransferase (394 aa).

Cys-88 (acyl-thioester intermediate) is an active-site residue. Active-site proton acceptor residues include His-349 and Cys-379.

It belongs to the thiolase-like superfamily. Thiolase family.

It is found in the cytoplasm. The catalysed reaction is 2 acetyl-CoA = acetoacetyl-CoA + CoA. It functions in the pathway metabolic intermediate biosynthesis; (R)-mevalonate biosynthesis; (R)-mevalonate from acetyl-CoA: step 1/3. The polypeptide is Acetyl-CoA acetyltransferase (atoB) (Escherichia coli (strain K12)).